A 94-amino-acid chain; its full sequence is Pyrimidine/purine nucleoside phosphorylase (94 aa).

Belongs to the nucleoside phosphorylase PpnP family.

The catalysed reaction is a purine D-ribonucleoside + phosphate = a purine nucleobase + alpha-D-ribose 1-phosphate. It catalyses the reaction adenosine + phosphate = alpha-D-ribose 1-phosphate + adenine. It carries out the reaction cytidine + phosphate = cytosine + alpha-D-ribose 1-phosphate. The enzyme catalyses guanosine + phosphate = alpha-D-ribose 1-phosphate + guanine. The catalysed reaction is inosine + phosphate = alpha-D-ribose 1-phosphate + hypoxanthine. It catalyses the reaction thymidine + phosphate = 2-deoxy-alpha-D-ribose 1-phosphate + thymine. It carries out the reaction uridine + phosphate = alpha-D-ribose 1-phosphate + uracil. The enzyme catalyses xanthosine + phosphate = alpha-D-ribose 1-phosphate + xanthine. In terms of biological role, catalyzes the phosphorolysis of diverse nucleosides, yielding D-ribose 1-phosphate and the respective free bases. Can use uridine, adenosine, guanosine, cytidine, thymidine, inosine and xanthosine as substrates. Also catalyzes the reverse reactions. The sequence is that of Pyrimidine/purine nucleoside phosphorylase from Salmonella heidelberg (strain SL476).